Reading from the N-terminus, the 100-residue chain is Large ribosomal subunit protein uL23 (100 aa).

The protein belongs to the universal ribosomal protein uL23 family. Part of the 50S ribosomal subunit. Contacts protein L29, and trigger factor when it is bound to the ribosome.

Functionally, one of the early assembly proteins it binds 23S rRNA. One of the proteins that surrounds the polypeptide exit tunnel on the outside of the ribosome. Forms the main docking site for trigger factor binding to the ribosome. In Prochlorococcus marinus subsp. pastoris (strain CCMP1986 / NIES-2087 / MED4), this protein is Large ribosomal subunit protein uL23.